The sequence spans 505 residues: Probable cytosol aminopeptidase (505 aa).

Lysine 269 and aspartate 274 together coordinate Mn(2+). Lysine 281 is an active-site residue. Mn(2+) is bound by residues aspartate 292, aspartate 351, and glutamate 353. Arginine 355 is a catalytic residue.

This sequence belongs to the peptidase M17 family. It depends on Mn(2+) as a cofactor.

It is found in the cytoplasm. The catalysed reaction is Release of an N-terminal amino acid, Xaa-|-Yaa-, in which Xaa is preferably Leu, but may be other amino acids including Pro although not Arg or Lys, and Yaa may be Pro. Amino acid amides and methyl esters are also readily hydrolyzed, but rates on arylamides are exceedingly low.. It carries out the reaction Release of an N-terminal amino acid, preferentially leucine, but not glutamic or aspartic acids.. Its function is as follows. Presumably involved in the processing and regular turnover of intracellular proteins. Catalyzes the removal of unsubstituted N-terminal amino acids from various peptides. In Rhodococcus opacus (strain B4), this protein is Probable cytosol aminopeptidase.